The chain runs to 282 residues: 3-methyl-2-oxobutanoate hydroxymethyltransferase (282 aa).

Residues Asp-63 and Asp-102 each contribute to the Mg(2+) site. 3-methyl-2-oxobutanoate is bound by residues 63-64 (DS), Asp-102, and Lys-132. Residue Glu-134 coordinates Mg(2+). Glu-200 functions as the Proton acceptor in the catalytic mechanism.

The protein belongs to the PanB family. As to quaternary structure, homodecamer; pentamer of dimers. Requires Mg(2+) as cofactor.

It localises to the cytoplasm. The enzyme catalyses 3-methyl-2-oxobutanoate + (6R)-5,10-methylene-5,6,7,8-tetrahydrofolate + H2O = 2-dehydropantoate + (6S)-5,6,7,8-tetrahydrofolate. The protein operates within cofactor biosynthesis; (R)-pantothenate biosynthesis; (R)-pantoate from 3-methyl-2-oxobutanoate: step 1/2. Catalyzes the reversible reaction in which hydroxymethyl group from 5,10-methylenetetrahydrofolate is transferred onto alpha-ketoisovalerate to form ketopantoate. This chain is 3-methyl-2-oxobutanoate hydroxymethyltransferase, found in Mycobacterium sp. (strain JLS).